The chain runs to 138 residues: HTH-type transcriptional regulator CueR (138 aa).

The HTH merR-type domain occupies 1-69 (MNISDVAKKT…LEECGELVNL (69 aa)). The segment at residues 4–23 (SDVAKKTGLTSKAIRFYEEK) is a DNA-binding region (H-T-H motif). Cu(+) contacts are provided by Cys-112 and Cys-120.

In terms of assembly, homodimer.

Its subcellular location is the cytoplasm. Regulates the transcription of the copA and cuiD (cueO) genes. Detects cytoplasmic copper stress and activates transcription in response to increasing copper concentrations. This Salmonella typhimurium (strain LT2 / SGSC1412 / ATCC 700720) protein is HTH-type transcriptional regulator CueR (cueR).